Here is a 475-residue protein sequence, read N- to C-terminus: Ribulose bisphosphate carboxylase large chain (475 aa).

Residues 1-2 (MV) constitute a propeptide that is removed on maturation. Pro-3 carries the post-translational modification N-acetylproline. An N6,N6,N6-trimethyllysine modification is found at Lys-14. Asn-123 and Thr-173 together coordinate substrate. Lys-175 (proton acceptor) is an active-site residue. Residue Lys-177 coordinates substrate. Mg(2+) is bound by residues Lys-201, Asp-203, and Glu-204. Lys-201 bears the N6-carboxylysine mark. Catalysis depends on His-294, which acts as the Proton acceptor. Substrate is bound by residues Arg-295, His-327, and Ser-379.

Belongs to the RuBisCO large chain family. Type I subfamily. In terms of assembly, heterohexadecamer of 8 large chains and 8 small chains. It depends on Mg(2+) as a cofactor.

The protein localises to the plastid. It localises to the chloroplast. It carries out the reaction 2 (2R)-3-phosphoglycerate + 2 H(+) = D-ribulose 1,5-bisphosphate + CO2 + H2O. The enzyme catalyses D-ribulose 1,5-bisphosphate + O2 = 2-phosphoglycolate + (2R)-3-phosphoglycerate + 2 H(+). RuBisCO catalyzes two reactions: the carboxylation of D-ribulose 1,5-bisphosphate, the primary event in carbon dioxide fixation, as well as the oxidative fragmentation of the pentose substrate in the photorespiration process. Both reactions occur simultaneously and in competition at the same active site. This chain is Ribulose bisphosphate carboxylase large chain, found in Stigeoclonium helveticum (Green alga).